We begin with the raw amino-acid sequence, 713 residues long: Bifunctional protein gal10 (713 aa).

The tract at residues 1-350 is galactowaldenase; that stretch reads MAVQDEYILV…TIENPFGFQI (350 aa). 7–38 is a binding site for NAD(+); it reads YILVTGGAGYIGSHTVIELINHGYKVIIVDNL. The interval 351–713 is mutarotase; sequence DNYKWKLFNT…SASYNSGEYY (363 aa). Histidine 532 serves as the catalytic For mutarotase activity.

This sequence in the N-terminal section; belongs to the NAD(P)-dependent epimerase/dehydratase family. In the C-terminal section; belongs to the aldose epimerase family. Requires NAD(+) as cofactor.

It catalyses the reaction UDP-alpha-D-glucose = UDP-alpha-D-galactose. The catalysed reaction is alpha-D-glucose = beta-D-glucose. It participates in carbohydrate metabolism; galactose metabolism. It functions in the pathway carbohydrate metabolism; hexose metabolism. Its function is as follows. Mutarotase converts alpha-aldose to the beta-anomer. It is active on D-glucose, L-arabinose, D-xylose, D-galactose, maltose and lactose. The protein is Bifunctional protein gal10 (gal10) of Schizosaccharomyces pombe (strain 972 / ATCC 24843) (Fission yeast).